The following is a 422-amino-acid chain: m7GpppN-mRNA hydrolase (422 aa).

The region spanning 95-226 (MGVPTYGAII…KLGLAPNKFF (132 aa)) is the Nudix hydrolase domain. Residues 129-150 (GKVNKEEAPHDCAAREVFEETG) carry the Nudix box motif. Residues Glu-144 and Glu-148 each coordinate Mn(2+). Phosphoserine is present on residues Ser-246, Ser-247, Ser-249, Ser-276, and Ser-284. Residues 247-347 (SDSDNGFSSA…GVHGQPAKQQ (101 aa)) form a disordered region. Over residues 249–258 (SDNGFSSAGS) the composition is skewed to low complexity. Basic and acidic residues predominate over residues 303 to 312 (NHGEVSDLLK).

The protein belongs to the Nudix hydrolase family. DCP2 subfamily. In terms of assembly, found in a mRNA decay complex with LSM1, LSM3, LSM4, EXOSC2, EXOSC4, EXOSC10, PARN, XRN1, CNOT6, UPF1, UPF2 and UPF3B. Forms a complex with DCP1A, EDC3, DDX6 and EDC4/HEDLS, within this complex directly interacts with EDC4/HEDLS. Interacts with DPC1B, UPF1, UPF2 and UPF3B. Associates with polysomes. Interacts (via N-terminus and C-terminus) with TRIM21 (via N-terminus and C-terminus). Interacts with LIMD1, WTIP and AJUBA. Interacts with DDX17 in an RNA-dependent manner. Interacts with ZC3HAV1. Interacts with APOBEC3G in an RNA-dependent manner. Interacts with ZFP36L1 (via N-terminus). Interacts with NBDY. Mn(2+) serves as cofactor. Requires Mg(2+) as cofactor. Strongly expressed in brain and testis. Weakly expressed in lung. Not detected in heart, liver, kidney and muscle (at protein level).

The protein localises to the cytoplasm. Its subcellular location is the P-body. It localises to the nucleus. It catalyses the reaction a 5'-end (N(7)-methyl 5'-triphosphoguanosine)-ribonucleoside in mRNA + H2O = N(7)-methyl-GDP + a 5'-end phospho-ribonucleoside in mRNA + 2 H(+). Functionally, decapping metalloenzyme that catalyzes the cleavage of the cap structure on mRNAs. Removes the 7-methyl guanine cap structure from mRNA molecules, yielding a 5'-phosphorylated mRNA fragment and 7m-GDP. Necessary for the degradation of mRNAs, both in normal mRNA turnover and in nonsense-mediated mRNA decay. Plays a role in replication-dependent histone mRNA degradation. Has higher activity towards mRNAs that lack a poly(A) tail. Has no activity towards a cap structure lacking an RNA moiety. The presence of a N(6)-methyladenosine methylation at the second transcribed position of mRNAs (N(6),2'-O-dimethyladenosine cap; m6A(m)) provides resistance to DCP2-mediated decapping. Blocks autophagy in nutrient-rich conditions by repressing the expression of ATG-related genes through degradation of their transcripts. The protein is m7GpppN-mRNA hydrolase (Dcp2) of Mus musculus (Mouse).